A 264-amino-acid polypeptide reads, in one-letter code: Rhodanese-like domain-containing protein 4A, chloroplastic (264 aa).

The N-terminal 60 residues, Met1–Leu60, are a transit peptide targeting the chloroplast. The chain crosses the membrane as a helical span at residues Phe95–Leu115. Residues Asn132 to Ile232 enclose the Rhodanese domain.

Its subcellular location is the plastid. It is found in the chloroplast. The protein resides in the membrane. In Arabidopsis thaliana (Mouse-ear cress), this protein is Rhodanese-like domain-containing protein 4A, chloroplastic (STR4A).